The following is a 369-amino-acid chain: Transcription initiation factor IIA large subunit (369 aa).

Composition is skewed to polar residues over residues 113-210 (HGNS…QNSP) and 218-233 (TESS…NDVP). Positions 113-248 (HGNSNYYSPP…IHDLDDAGSP (136 aa)) are disordered. A Phosphoserine modification is found at serine 249. The tract at residues 282 to 319 (IEDNEDEKKPPVDTPSDEAINSDLDDPDSDEAPETEEG) is disordered. Acidic residues predominate over residues 304-319 (DLDDPDSDEAPETEEG).

It belongs to the TFIIA subunit 1 family. In terms of assembly, TFIIA is a heterodimer of the large subunit and the small subunit gamma.

The protein resides in the nucleus. TFIIA is a component of the transcription machinery of RNA polymerase II and plays an important role in transcriptional activation. TFIIA in a complex with tbp mediates transcriptional activity. In Schizosaccharomyces pombe (strain 972 / ATCC 24843) (Fission yeast), this protein is Transcription initiation factor IIA large subunit.